The primary structure comprises 172 residues: uncharacterized protein (172 aa).

3 helical membrane-spanning segments follow: residues 44–68 (VLVS…AALT), 86–110 (LASY…VFSL), and 117–135 (VVFI…VTLF).

Belongs to the chlamydial CPn_0442/CT_006/TC_0274 family.

The protein localises to the cell membrane. This is an uncharacterized protein from Chlamydia pneumoniae (Chlamydophila pneumoniae).